The primary structure comprises 275 residues: Rhamnulose-1-phosphate aldolase (275 aa).

Residue E117 is part of the active site. Zn(2+)-binding residues include H141, H143, and H212.

The protein belongs to the aldolase class II family. RhaD subfamily. Homotetramer. The cofactor is Zn(2+).

The protein localises to the cytoplasm. It carries out the reaction L-rhamnulose 1-phosphate = (S)-lactaldehyde + dihydroxyacetone phosphate. The protein operates within carbohydrate degradation; L-rhamnose degradation; glycerone phosphate from L-rhamnose: step 3/3. Catalyzes the reversible cleavage of L-rhamnulose-1-phosphate to dihydroxyacetone phosphate (DHAP) and L-lactaldehyde. In Salmonella choleraesuis (strain SC-B67), this protein is Rhamnulose-1-phosphate aldolase.